A 721-amino-acid polypeptide reads, in one-letter code: uncharacterized protein (721 aa).

Disordered regions lie at residues 196 to 291 (TSMT…VGGP) and 370 to 513 (AGIP…AAEQ). Composition is skewed to low complexity over residues 202–224 (SPAG…TSGP) and 232–250 (SPFG…SSGP). Composition is skewed to pro residues over residues 264 to 283 (PMPP…PPSA) and 379 to 389 (APTPSPAPIAP). The span at 419-429 (APAGPLPAYGA) shows a compositional bias: low complexity. Residues 435–446 (VTTPPATPPTPT) are compositionally biased toward pro residues. The span at 470-484 (VNKSTAPATTQAQPS) shows a compositional bias: polar residues. The segment covering 491 to 505 (ASATAAATTGAAAGD) has biased composition (low complexity).

This is an uncharacterized protein from Mycobacterium tuberculosis (strain ATCC 25618 / H37Rv).